Here is a 451-residue protein sequence, read N- to C-terminus: Phosphoglucosamine mutase (451 aa).

Ser-102 serves as the catalytic Phosphoserine intermediate. Mg(2+) is bound by residues Ser-102, Asp-242, Asp-244, and Asp-246. At Ser-102 the chain carries Phosphoserine.

It belongs to the phosphohexose mutase family. It depends on Mg(2+) as a cofactor. In terms of processing, activated by phosphorylation.

It carries out the reaction alpha-D-glucosamine 1-phosphate = D-glucosamine 6-phosphate. In terms of biological role, catalyzes the conversion of glucosamine-6-phosphate to glucosamine-1-phosphate. The protein is Phosphoglucosamine mutase of Staphylococcus carnosus (strain TM300).